Here is a 117-residue protein sequence, read N- to C-terminus: Putative membrane protein insertion efficiency factor (117 aa).

A disordered region spans residues R87–A117.

The protein belongs to the UPF0161 family.

The protein localises to the cell membrane. Functionally, could be involved in insertion of integral membrane proteins into the membrane. This is Putative membrane protein insertion efficiency factor from Streptomyces avermitilis (strain ATCC 31267 / DSM 46492 / JCM 5070 / NBRC 14893 / NCIMB 12804 / NRRL 8165 / MA-4680).